The chain runs to 1034 residues: Beta-galactosidase (1034 aa).

Catalysis depends on Glu-481, which acts as the Proton donor. Catalysis depends on Glu-547, which acts as the Nucleophile.

The protein belongs to the glycosyl hydrolase 2 family.

The enzyme catalyses Hydrolysis of terminal non-reducing beta-D-galactose residues in beta-D-galactosides.. The protein is Beta-galactosidase (bgaM) of Priestia megaterium (strain DSM 319 / IMG 1521) (Bacillus megaterium).